The following is a 63-amino-acid chain: Frenatin 1.1 (63 aa).

Positions 1-22 (MAFLKKSLFLVLFLGLVSLSIC) are cleaved as a signal peptide. Residues 23-49 (EKEKKEQEDEDENEEEKESEEGSEEKR) constitute a propeptide that is removed on maturation. A disordered region spans residues 25-63 (EKKEQEDEDENEEEKESEEGSEEKRGLLDTLGGILGLGR). Residues 30–45 (EDEDENEEEKESEEGS) are compositionally biased toward acidic residues. At Leu61 the chain carries Leucine amide.

As to expression, expressed by the skin glands.

Its subcellular location is the secreted. In terms of biological role, antimicrobial peptide with selective activity. Is only active against Micrococcus luteus (MIC=25 ug/ml) and not against Bacillus cereus, Escherichia coli, Leuconostoc mesenteroides, Micrococcus luteus, Pastewella haemolytica, Staphylococcus aureus, Streptococcus faecalis and Streptococcus uberis. The protein is Frenatin 1.1 of Nyctimystes infrafrenatus (White-lipped tree frog).